The sequence spans 436 residues: Testis-expressed protein 44 (436 aa).

2 stretches are compositionally biased toward acidic residues: residues 1-10 (MTTEPLEDPE) and 45-54 (LPDEVPPEDI). Disordered regions lie at residues 1–142 (MTTE…LTSL) and 165–307 (AENN…SLYG). 2 stretches are compositionally biased toward polar residues: residues 81-103 (ASMQIATSMGQNKDRASMQTDTS) and 167-195 (NNRTSRSRTVSPSDSQTQEKTSGKSTVSE). A compositionally biased stretch (basic and acidic residues) spans 234–247 (EPTKSADQEAEDFK). The segment covering 273–289 (QAPPSPNSPADSPPPSP) has biased composition (pro residues). Ser375 carries the post-translational modification Phosphoserine.

The protein localises to the cytoplasm. The chain is Testis-expressed protein 44 (Tex44) from Rattus norvegicus (Rat).